A 672-amino-acid chain; its full sequence is ABC transporter G family member 21 (672 aa).

The span at 1–35 (MMPPNEQESSFPKTPSANRHETSPVQENRFSSPSH) shows a compositional bias: polar residues. The interval 1–59 (MMPPNEQESSFPKTPSANRHETSPVQENRFSSPSHVNPCLDDDNDHDGPSHQSRQSSVL) is disordered. The segment covering 50-59 (SHQSRQSSVL) has biased composition (low complexity). The region spanning 68 to 322 (LKFEELTYSI…FGSIGYQPGS (255 aa)) is the ABC transporter domain. Residue 117-124 (GPSGSGKT) coordinates ATP. The region spanning 411-617 (MQFSVLLKRG…CYKLLVGVQY (207 aa)) is the ABC transmembrane type-2 domain. Transmembrane regions (helical) follow at residues 429 to 449 (FSGL…LLWW), 460 to 480 (VGLL…NAIF), 512 to 532 (LPME…MGGL), 543 to 563 (LMIV…LGAI), 576 to 596 (VLML…PGFI), and 649 to 669 (WDVL…YLAL).

The protein belongs to the ABC transporter superfamily. ABCG family. Eye pigment precursor importer (TC 3.A.1.204) subfamily.

The protein resides in the membrane. The chain is ABC transporter G family member 21 (ABCG21) from Arabidopsis thaliana (Mouse-ear cress).